Here is a 333-residue protein sequence, read N- to C-terminus: Protein amalgam (333 aa).

A signal peptide spans 1-23; that stretch reads MARLRLLIGLIFCLAISLDSVLS. The 104-residue stretch at 25–128 folds into the Ig-like V-type domain; sequence PVISQISKDV…VLVSATEKVT (104 aa). Asn45 and Asn86 each carry an N-linked (GlcNAc...) asparagine glycan. 3 disulfide bridges follow: Cys46/Cys117, Cys161/Cys208, and Cys251/Cys307. Ig-like C2-type domains are found at residues 139 to 223 and 230 to 323; these read PVIA…RLIR and PQIA…LHLF. Asn308 carries an N-linked (GlcNAc...) asparagine glycan.

The protein resides in the cell membrane. The sequence is that of Protein amalgam (Ama) from Drosophila melanogaster (Fruit fly).